Here is a 230-residue protein sequence, read N- to C-terminus: uncharacterized protein (230 aa).

This is an uncharacterized protein from Dictyostelium discoideum (Social amoeba).